We begin with the raw amino-acid sequence, 437 residues long: Dolichyl-diphosphooligosaccharide--protein glycosyltransferase 48 kDa subunit (437 aa).

Residues 1-24 (MVNLSRSVALISVFLLPLLSFSFS) form the signal peptide. Topologically, residues 25 to 414 (VDNPTDRRVL…YERFIPTAYP (390 aa)) are lumenal. Residues 415–435 (YYGACFTTMAGFFVFSFVYLY) traverse the membrane as a helical segment. Residues 436-437 (HK) lie on the Cytoplasmic side of the membrane.

The protein belongs to the DDOST 48 kDa subunit family. Component of the oligosaccharyltransferase (OST) complex.

It localises to the endoplasmic reticulum membrane. It participates in protein modification; protein glycosylation. In terms of biological role, subunit of the oligosaccharyl transferase (OST) complex that catalyzes the initial transfer of a defined glycan (Glc(3)Man(9)GlcNAc(2) in eukaryotes) from the lipid carrier dolichol-pyrophosphate to an asparagine residue within an Asn-X-Ser/Thr consensus motif in nascent polypeptide chains, the first step in protein N-glycosylation. N-glycosylation occurs cotranslationally and the complex associates with the Sec61 complex at the channel-forming translocon complex that mediates protein translocation across the endoplasmic reticulum (ER). All subunits are required for a maximal enzyme activity. This chain is Dolichyl-diphosphooligosaccharide--protein glycosyltransferase 48 kDa subunit (OST48), found in Arabidopsis thaliana (Mouse-ear cress).